The primary structure comprises 65 residues: MVPKQKTHSGAKKRFKLTGSGSVSRARAGMRHNFEHRSSRVTRRLTGRQFVSDADSKLARKLLGK.

Residues 1 to 16 (MVPKQKTHSGAKKRFK) are compositionally biased toward basic residues. Residues 1-39 (MVPKQKTHSGAKKRFKLTGSGSVSRARAGMRHNFEHRSS) form a disordered region.

This sequence belongs to the bacterial ribosomal protein bL35 family.

The sequence is that of Large ribosomal subunit protein bL35 from Tropheryma whipplei (strain TW08/27) (Whipple's bacillus).